A 93-amino-acid chain; its full sequence is Protamine-3 (93 aa).

The disordered stretch occupies residues 1 to 93 (MGSRCAKLGT…QSPEPKQTRS (93 aa)). Acidic residues predominate over residues 37–57 (EGEEEEEGEEEEEEEGEEEEL). Polar residues predominate over residues 81–93 (EVQQSPEPKQTRS). S85 carries the phosphoserine modification.

It belongs to the protamine P3 family.

The protein resides in the nucleus. It localises to the chromosome. Protamines substitute for histones in the chromatin of sperm during the haploid phase of spermatogenesis. They compact sperm DNA into a highly condensed, stable and inactive complex. This is Protamine-3 (PRM3) from Bos taurus (Bovine).